A 151-amino-acid chain; its full sequence is SsrA-binding protein (151 aa).

Positions 132 to 151 are disordered; the sequence is KRQTIKKRDQDREIHRKYGI.

Belongs to the SmpB family.

The protein resides in the cytoplasm. Required for rescue of stalled ribosomes mediated by trans-translation. Binds to transfer-messenger RNA (tmRNA), required for stable association of tmRNA with ribosomes. tmRNA and SmpB together mimic tRNA shape, replacing the anticodon stem-loop with SmpB. tmRNA is encoded by the ssrA gene; the 2 termini fold to resemble tRNA(Ala) and it encodes a 'tag peptide', a short internal open reading frame. During trans-translation Ala-aminoacylated tmRNA acts like a tRNA, entering the A-site of stalled ribosomes, displacing the stalled mRNA. The ribosome then switches to translate the ORF on the tmRNA; the nascent peptide is terminated with the 'tag peptide' encoded by the tmRNA and targeted for degradation. The ribosome is freed to recommence translation, which seems to be the essential function of trans-translation. The chain is SsrA-binding protein from Lactobacillus gasseri (strain ATCC 33323 / DSM 20243 / BCRC 14619 / CIP 102991 / JCM 1131 / KCTC 3163 / NCIMB 11718 / NCTC 13722 / AM63).